Here is a 440-residue protein sequence, read N- to C-terminus: Xaa-Pro dipeptidase (440 aa).

Mn(2+) is bound by residues aspartate 241, aspartate 252, histidine 333, glutamate 378, and glutamate 417.

The protein belongs to the peptidase M24B family. Bacterial-type prolidase subfamily. Requires Mn(2+) as cofactor.

It carries out the reaction Xaa-L-Pro dipeptide + H2O = an L-alpha-amino acid + L-proline. Functionally, splits dipeptides with a prolyl residue in the C-terminal position. This Glaesserella parasuis serovar 5 (strain SH0165) (Haemophilus parasuis) protein is Xaa-Pro dipeptidase.